The chain runs to 491 residues: Glutamate--tRNA ligase (491 aa).

The 'HIGH' region signature appears at 13–23; it reads PSPTGFLHIGN. Zn(2+) contacts are provided by Cys110, Cys112, Cys137, and His139. A 'KMSKS' region motif is present at residues 254 to 258; sequence KLSKR. Lys257 contacts ATP.

It belongs to the class-I aminoacyl-tRNA synthetase family. Glutamate--tRNA ligase type 1 subfamily. Monomer. The cofactor is Zn(2+).

It is found in the cytoplasm. It carries out the reaction tRNA(Glu) + L-glutamate + ATP = L-glutamyl-tRNA(Glu) + AMP + diphosphate. Catalyzes the attachment of glutamate to tRNA(Glu) in a two-step reaction: glutamate is first activated by ATP to form Glu-AMP and then transferred to the acceptor end of tRNA(Glu). The sequence is that of Glutamate--tRNA ligase from Listeria welshimeri serovar 6b (strain ATCC 35897 / DSM 20650 / CCUG 15529 / CIP 8149 / NCTC 11857 / SLCC 5334 / V8).